The following is a 154-amino-acid chain: UPF0225 protein YPDSF_0962 (154 aa).

It belongs to the UPF0225 family.

This chain is UPF0225 protein YPDSF_0962, found in Yersinia pestis (strain Pestoides F).